Reading from the N-terminus, the 358-residue chain is Phosphoserine aminotransferase (358 aa).

Residue arginine 41 coordinates L-glutamate. Pyridoxal 5'-phosphate-binding positions include 75–76 (AR), tryptophan 101, threonine 150, aspartate 170, and glutamine 193. Lysine 194 carries the post-translational modification N6-(pyridoxal phosphate)lysine. Position 235 to 236 (235 to 236 (NT)) interacts with pyridoxal 5'-phosphate.

Belongs to the class-V pyridoxal-phosphate-dependent aminotransferase family. SerC subfamily. Homodimer. Pyridoxal 5'-phosphate is required as a cofactor.

Its subcellular location is the cytoplasm. The catalysed reaction is O-phospho-L-serine + 2-oxoglutarate = 3-phosphooxypyruvate + L-glutamate. It catalyses the reaction 4-(phosphooxy)-L-threonine + 2-oxoglutarate = (R)-3-hydroxy-2-oxo-4-phosphooxybutanoate + L-glutamate. It participates in amino-acid biosynthesis; L-serine biosynthesis; L-serine from 3-phospho-D-glycerate: step 2/3. Its pathway is cofactor biosynthesis; pyridoxine 5'-phosphate biosynthesis; pyridoxine 5'-phosphate from D-erythrose 4-phosphate: step 3/5. Its function is as follows. Catalyzes the reversible conversion of 3-phosphohydroxypyruvate to phosphoserine and of 3-hydroxy-2-oxo-4-phosphonooxybutanoate to phosphohydroxythreonine. This Histophilus somni (strain 129Pt) (Haemophilus somnus) protein is Phosphoserine aminotransferase.